A 95-amino-acid chain; its full sequence is uncharacterized protein (95 aa).

This is an uncharacterized protein from Escherichia coli O6:H1 (strain CFT073 / ATCC 700928 / UPEC).